The chain runs to 73 residues: uncharacterized protein (73 aa).

A signal peptide spans 1 to 28 (MKFLLSVIAGLLILALYLFWKVQPPVWI).

This is an uncharacterized protein from Bacillus subtilis (strain 168).